Consider the following 44-residue polypeptide: Mu-conotoxin-like Cal 12.1.2f (44 aa).

4 disulfide bridges follow: Cys-3–Cys-15, Cys-10–Cys-27, Cys-17–Cys-32, and Cys-26–Cys-38. Residue Trp-16 is modified to 6'-bromotryptophan. The residue at position 22 (Pro-22) is a 4-hydroxyproline. 6'-bromotryptophan occurs at positions 36 and 37. The residue at position 39 (Pro-39) is a 4-hydroxyproline. Trp-43 is subject to 6'-bromotryptophan.

In terms of tissue distribution, expressed by the venom duct.

Its subcellular location is the secreted. Functionally, mu-conotoxins block voltage-gated sodium channels. This toxin reversibly blocks voltage-gated sodium channel in cephalopods, with no alteration in the voltage dependence of sodium conductance or on the kinetics of inactivation. This chain is Mu-conotoxin-like Cal 12.1.2f, found in Californiconus californicus (California cone).